A 93-amino-acid polypeptide reads, in one-letter code: Leukocyte-specific transcript 1 protein (93 aa).

A helical transmembrane segment spans residues 14 to 32 (AGSCCWLWSFCPPACIGCI). Position 54 is a phosphoserine (serine 54). The segment at 57 to 82 (RLPVSSSEGPDLRDRDKRGTKEDPRA) is disordered. The span at 66–82 (PDLRDRDKRGTKEDPRA) shows a compositional bias: basic and acidic residues.

It belongs to the LST1 family.

The protein localises to the membrane. The protein resides in the golgi apparatus membrane. Its subcellular location is the endomembrane system. Its function is as follows. Possible role in modulating immune responses. Has an inhibitory effect on lymphocyte proliferation. Induces morphological changes including production of filopodia and microspikes when overexpressed in a variety of cell types and may be involved in dendritic cell maturation. In Macaca mulatta (Rhesus macaque), this protein is Leukocyte-specific transcript 1 protein (LST1).